The sequence spans 237 residues: Putative exosome complex component rrp40 (237 aa).

One can recognise an S1 motif domain in the interval 67–137 (EDMVIGTIIE…EPEVVCLSQK (71 aa)).

Belongs to the RRP40 family. As to quaternary structure, component of the RNA exosome complex.

The protein localises to the cytoplasm. It is found in the nucleus. It localises to the nucleolus. In terms of biological role, non-catalytic component of the RNA exosome complex which has 3'-&gt;5' exoribonuclease activity and participates in a multitude of cellular RNA processing and degradation events. The polypeptide is Putative exosome complex component rrp40 (exosc3) (Dictyostelium discoideum (Social amoeba)).